Here is a 141-residue protein sequence, read N- to C-terminus: Large ribosomal subunit protein uL11 (141 aa).

The protein belongs to the universal ribosomal protein uL11 family. In terms of assembly, part of the ribosomal stalk of the 50S ribosomal subunit. Interacts with L10 and the large rRNA to form the base of the stalk. L10 forms an elongated spine to which L12 dimers bind in a sequential fashion forming a multimeric L10(L12)X complex. One or more lysine residues are methylated.

Forms part of the ribosomal stalk which helps the ribosome interact with GTP-bound translation factors. This Maridesulfovibrio salexigens (strain ATCC 14822 / DSM 2638 / NCIMB 8403 / VKM B-1763) (Desulfovibrio salexigens) protein is Large ribosomal subunit protein uL11.